The chain runs to 62 residues: DNA gyrase inhibitor YacG (62 aa).

Zn(2+) is bound by residues cysteine 9, cysteine 12, cysteine 27, and cysteine 31. Positions 43 to 52 (GYRIPGEKAP) are enriched in basic and acidic residues. The segment at 43–62 (GYRIPGEKAPESGGEEPGDE) is disordered.

Belongs to the DNA gyrase inhibitor YacG family. Interacts with GyrB. Zn(2+) is required as a cofactor.

Its function is as follows. Inhibits all the catalytic activities of DNA gyrase by preventing its interaction with DNA. Acts by binding directly to the C-terminal domain of GyrB, which probably disrupts DNA binding by the gyrase. In Geobacter sp. (strain M21), this protein is DNA gyrase inhibitor YacG.